The primary structure comprises 490 residues: MSQVIKKKRNTFMIGTEYILNSTQLEEAIKSFVHDFCAEKHEIHDQPVVVEAKEHQEDKIKQIKIPEKGRPVNEVVSEMMNEVYRYRGDANHPRFFSFVPGPASSVSWLGDIMTSAYNIHAGGSKLAPMVNCIEQEVLKWLAKQVGFTENPGGVFVSGGSMANITALTAARDNKLTDINLHLGTAYISDQTHSSVAKGLRIIGITDSRIRRIPTNSHFQMDTTKLEEAIETDKKSGYIPFVVIGTAGTTNTGSIDPLTEISALCKKHDMWFHIDGAYGASVLLSPKYKSLLTGTGLADSISWDAHKWLFQTYGCAMVLVKDIRNLFHSFHVNPEYLKDLENDIDNVNTWDIGMELTRPARGLKLWLTLQVLGSDLIGSAIEHGFQLAVWAEEALNPKKDWEIVSPAQMAMINFRYAPKDLTKEEQDILNEKISHRILESGYAAIFTTVLNGKTVLRICAIHPEATQEDMQHTIDLLDQYGREIYTEMKKA.

Lysine 306 is modified (N6-(pyridoxal phosphate)lysine).

This sequence belongs to the group II decarboxylase family. Homodimer. Pyridoxal 5'-phosphate serves as cofactor.

Its subcellular location is the cytoplasm. The enzyme catalyses L-tryptophan + H(+) = tryptamine + CO2. Inhibited by (S)-alpha-fluoromethyltryptophan. Catalyzes the decarboxylation of tryptophan to tryptamine. Tryptamine is a neurotransmitter that induces the release of serotonin, which is suggested to modulate gastrointestinal motility. Therefore, the tryptophan decarboxylase from the gut bacteria Ruminococcus gnavus (strain ATCC 29149 / VPI C7-9) may influence host brain and behavior. Has weak activity with tyrosine and phenylalanine. The chain is Tryptophan decarboxylase from Mediterraneibacter gnavus (strain ATCC 29149 / DSM 114966 / JCM 6515 / VPI C7-9) (Ruminococcus gnavus).